The chain runs to 182 residues: Ribosome-recycling factor (182 aa).

Belongs to the RRF family.

The protein resides in the cytoplasm. In terms of biological role, responsible for the release of ribosomes from messenger RNA at the termination of protein biosynthesis. May increase the efficiency of translation by recycling ribosomes from one round of translation to another. The protein is Ribosome-recycling factor of Gloeobacter violaceus (strain ATCC 29082 / PCC 7421).